The primary structure comprises 514 residues: Transmembrane protein 151B (514 aa).

Positions 1–40 (MSAEGEPAEAVAETPANSPGEEAAAAAATTDVDVREEQRP) are disordered. 3 consecutive transmembrane segments (helical) span residues 57–77 (CLLLSILMFVCLGAVTWCQVT), 104–124 (YVYIPLAFLAMLYVVYLVECW), and 286–306 (PWYVSHYAFWVAALFMLSWPL).

The protein belongs to the TMEM151 family.

It is found in the membrane. The protein is Transmembrane protein 151B (tmem151b) of Xenopus tropicalis (Western clawed frog).